The following is a 247-amino-acid chain: Uridylate kinase (247 aa).

Residue 17-20 coordinates ATP; the sequence is KFSG. Residue Gly-59 participates in UMP binding. The ATP site is built by Gly-60 and Arg-64. UMP is bound by residues Asp-79 and 140 to 147; that span reads TGNPFFTT. ATP contacts are provided by Thr-167, Tyr-173, and Asp-176.

This sequence belongs to the UMP kinase family. Homohexamer.

The protein localises to the cytoplasm. It carries out the reaction UMP + ATP = UDP + ADP. The protein operates within pyrimidine metabolism; CTP biosynthesis via de novo pathway; UDP from UMP (UMPK route): step 1/1. Inhibited by UTP. Functionally, catalyzes the reversible phosphorylation of UMP to UDP. This chain is Uridylate kinase, found in Legionella pneumophila (strain Paris).